The primary structure comprises 112 residues: Protein Churchill (112 aa).

Zn(2+) contacts are provided by C2, C5, C30, C33, H59, C61, C64, H66, H71, C88, and C91.

The protein belongs to the Churchill family.

In terms of biological role, transcriptional activator that mediates FGF signaling during neural development. Plays a role in the regulation of cell movement. Its function is as follows. Does not bind DNA by itself. This chain is Protein Churchill (CHURC1), found in Homo sapiens (Human).